Here is a 329-residue protein sequence, read N- to C-terminus: MSMKQPVRVAVTGAAGNISYAMLFRIASGEMLGKDQPVILQLLEIAPALDALKGVVMELEDCAFPLLAGIVQTDDATVAFKDVDYALLVGSRPRGPGMERKDLLEANAAIFSAQGKALNDVASRDVKVLVVGNPANTNALIAQRNAPDLDPRNFTAMTRLDHNRAMAQLAGKTDSTVNDVKKMIIWGNHSSTQYPDLTASTVNGKLALDLVDRTWYEGTYIPEVQQRGAAIIKARGASSAASAANAAIAHMRTWVLGTDENDWVSMGVYSNGEYGIAKGLIYSFPCTCTNGDWSIVDGVDVSSAFSKEKMAATEQELSEERDAVAHLLP.

Residue 13 to 19 (GAAGNIS) participates in NAD(+) binding. Substrate is bound by residues R94 and R100. NAD(+) is bound by residues N107, Q114, and 131 to 133 (VGN). N133 and R164 together coordinate substrate. H189 (proton acceptor) is an active-site residue.

The protein belongs to the LDH/MDH superfamily. MDH type 2 family.

The enzyme catalyses (S)-malate + NAD(+) = oxaloacetate + NADH + H(+). In terms of biological role, catalyzes the reversible oxidation of malate to oxaloacetate. The chain is Malate dehydrogenase from Psychrobacter arcticus (strain DSM 17307 / VKM B-2377 / 273-4).